Here is a 143-residue protein sequence, read N- to C-terminus: Nucleoside diphosphate kinase (143 aa).

Lys-11, Phe-59, Arg-87, Thr-93, Arg-104, and Asn-114 together coordinate ATP. His-117 acts as the Pros-phosphohistidine intermediate in catalysis.

Belongs to the NDK family. In terms of assembly, homotetramer. Mg(2+) is required as a cofactor.

The protein localises to the cytoplasm. The enzyme catalyses a 2'-deoxyribonucleoside 5'-diphosphate + ATP = a 2'-deoxyribonucleoside 5'-triphosphate + ADP. It carries out the reaction a ribonucleoside 5'-diphosphate + ATP = a ribonucleoside 5'-triphosphate + ADP. Major role in the synthesis of nucleoside triphosphates other than ATP. The ATP gamma phosphate is transferred to the NDP beta phosphate via a ping-pong mechanism, using a phosphorylated active-site intermediate. The polypeptide is Nucleoside diphosphate kinase (Shewanella halifaxensis (strain HAW-EB4)).